Reading from the N-terminus, the 434-residue chain is METKRSKLYLLTLGCSKNMVDSEVLLAQAKANQIYLAEDFHEADTILINTCGFIDKSKQESIDQILEAIRFKEAKRIKKVIVFGCLSERYKDALREEIPEVDCYFGTRDLSQIIAELGGHYKTHLLGERELLTPPYFSYLKISEGCDHPCAFCAIPLMRGKQVSRPIDELLLEAKKLKEKGVRELCLIAQDTTYYGHDLNGKRQLAELLQRLSDLQFDWIRLLYAYPAMFPTDILPVMRERENICKYLDLPLQHVSDEMLKSMRRGISKRKTTELIAQIRSEVPGIRLRTTMLVGYPNETEEQFSELVEFVRETQFDRLGCFAYSHEEGTEAHELPDTLTEEEKERRVELLMAAQEEIAYAKNQALVGSFMPVLIERFEANFAIGRTEYDAPEVDNEVVIALDEAEQKKVKVGTFYQARITDAEAFDLFGSLVL.

The MTTase N-terminal domain maps to 6 to 122; the sequence is SKLYLLTLGC…IIAELGGHYK (117 aa). Cys-15, Cys-51, Cys-85, Cys-146, Cys-150, and Cys-153 together coordinate [4Fe-4S] cluster. Residues 132-361 form the Radical SAM core domain; that stretch reads LTPPYFSYLK…MAAQEEIAYA (230 aa). Residues 364-434 form the TRAM domain; it reads QALVGSFMPV…AFDLFGSLVL (71 aa).

It belongs to the methylthiotransferase family. RimO subfamily. It depends on [4Fe-4S] cluster as a cofactor.

It is found in the cytoplasm. The catalysed reaction is L-aspartate(89)-[ribosomal protein uS12]-hydrogen + (sulfur carrier)-SH + AH2 + 2 S-adenosyl-L-methionine = 3-methylsulfanyl-L-aspartate(89)-[ribosomal protein uS12]-hydrogen + (sulfur carrier)-H + 5'-deoxyadenosine + L-methionine + A + S-adenosyl-L-homocysteine + 2 H(+). Functionally, catalyzes the methylthiolation of an aspartic acid residue of ribosomal protein uS12. The chain is Ribosomal protein uS12 methylthiotransferase RimO from Chloroherpeton thalassium (strain ATCC 35110 / GB-78).